Here is a 397-residue protein sequence, read N- to C-terminus: Flavohemoprotein A (397 aa).

The region spanning S2–A137 is the Globin domain. A heme b-binding site is contributed by H84. Active-site charge relay system residues include Y94 and E136. The segment at W150–V397 is reductase. The 116-residue stretch at R151–D266 folds into the FAD-binding FR-type domain. FAD is bound by residues Y189 and R208 to S211. G279 to P284 serves as a coordination point for NADP(+). FAD is bound at residue I390–P393.

This sequence belongs to the globin family. Two-domain flavohemoproteins subfamily. It in the C-terminal section; belongs to the flavoprotein pyridine nucleotide cytochrome reductase family. FAD serves as cofactor. The cofactor is heme b.

Its subcellular location is the cytoplasm. It catalyses the reaction 2 nitric oxide + NADPH + 2 O2 = 2 nitrate + NADP(+) + H(+). It carries out the reaction 2 nitric oxide + NADH + 2 O2 = 2 nitrate + NAD(+) + H(+). In terms of biological role, is involved in NO detoxification in an aerobic process, termed nitric oxide dioxygenase (NOD) reaction that utilizes O(2) and NAD(P)H to convert NO to nitrate, which protects the cell from various noxious nitrogen compounds. Therefore, plays a central role in the inducible response to nitrosative stress. Functionally, in the presence of oxygen and NADH, it has NADH oxidase activity, which leads to the generation of superoxide and H(2)O(2). Under anaerobic conditions, it also exhibits nitric oxide reductase and FAD reductase activities. However, all these reactions are much lower than NOD activity. In Dictyostelium discoideum (Social amoeba), this protein is Flavohemoprotein A (fhbA).